The following is a 187-amino-acid chain: CASP-like protein SELMODRAFT_416718 (187 aa).

The chain crosses the membrane as a helical span at residues 1 to 21 (MMFGGVGMATLPLSLIFAFKN). Topologically, residues 22–100 (RPKCVITRAQ…EAFPQGEKAD (79 aa)) are extracellular. Residues 101–119 (TSWALTVLFYLAKLVFGIL) traverse the membrane as a helical segment. Residues 120 to 125 (GLALSV) lie on the Cytoplasmic side of the membrane. A helical transmembrane segment spans residues 126–145 (IWLLHIIVFMLVNPPAFPFL). Residues 146–155 (NQVFIQLDSA) are Extracellular-facing. The helical transmembrane segment at 156–176 (WGLLGTTAFAIFCYYLVMSVI) threads the bilayer. Over 177–187 (SGEMHSIYPMK) the chain is Cytoplasmic.

Belongs to the Casparian strip membrane proteins (CASP) family. As to quaternary structure, homodimer and heterodimers.

The protein localises to the cell membrane. This chain is CASP-like protein SELMODRAFT_416718, found in Selaginella moellendorffii (Spikemoss).